Consider the following 315-residue polypeptide: tRNA dimethylallyltransferase (315 aa).

13–20 provides a ligand contact to ATP; sequence GPTASGKS. 15–20 serves as a coordination point for substrate; sequence TASGKS. Interaction with substrate tRNA regions lie at residues 38 to 41 and 162 to 166; these read DSMQ and QRLAR.

The protein belongs to the IPP transferase family. As to quaternary structure, monomer. Requires Mg(2+) as cofactor.

It catalyses the reaction adenosine(37) in tRNA + dimethylallyl diphosphate = N(6)-dimethylallyladenosine(37) in tRNA + diphosphate. Its function is as follows. Catalyzes the transfer of a dimethylallyl group onto the adenine at position 37 in tRNAs that read codons beginning with uridine, leading to the formation of N6-(dimethylallyl)adenosine (i(6)A). The protein is tRNA dimethylallyltransferase of Paramagnetospirillum magneticum (strain ATCC 700264 / AMB-1) (Magnetospirillum magneticum).